Reading from the N-terminus, the 623-residue chain is Bifunctional methionine biosynthesis protein MetXA/MetW (623 aa).

Positions 1 to 17 (MTSGRSTRVTMFESQAS) are enriched in polar residues. The tract at residues 1–30 (MTSGRSTRVTMFESQASMGEPSNEDLSSTD) is disordered. The region spanning 77–385 (NAVLVCHAVS…TTNAGHDAFL (309 aa)) is the AB hydrolase-1 domain. Residue Ser183 is the Nucleophile of the active site. Substrate is bound at residue Arg253. Residues Asp348 and His381 contribute to the active site. A substrate-binding site is contributed by Asp382. The interval 417–619 (NVDEESILEI…NADTAVIAFH (203 aa)) is metW.

In the N-terminal section; belongs to the AB hydrolase superfamily. MetX family. The protein in the C-terminal section; belongs to the MetW family. Homodimer.

It localises to the cytoplasm. It catalyses the reaction L-homoserine + acetyl-CoA = O-acetyl-L-homoserine + CoA. It participates in amino-acid biosynthesis; L-methionine biosynthesis via de novo pathway; O-acetyl-L-homoserine from L-homoserine: step 1/1. Its function is as follows. Transfers an acetyl group from acetyl-CoA to L-homoserine, forming acetyl-L-homoserine. The chain is Bifunctional methionine biosynthesis protein MetXA/MetW from Rhodopirellula baltica (strain DSM 10527 / NCIMB 13988 / SH1).